A 264-amino-acid polypeptide reads, in one-letter code: uncharacterized protein (264 aa).

The interval 1–20 (MENIEKKCQPETINEDNNDE) is disordered.

This sequence belongs to the mimivirus R73/L269/L862 family.

This is an uncharacterized protein from Acanthamoeba polyphaga mimivirus (APMV).